The primary structure comprises 307 residues: Agmatinase (307 aa).

Mn(2+)-binding residues include histidine 128, aspartate 151, histidine 153, aspartate 155, aspartate 232, and aspartate 234.

This sequence belongs to the arginase family. Agmatinase subfamily. Requires Mn(2+) as cofactor.

It catalyses the reaction agmatine + H2O = urea + putrescine. Its pathway is amine and polyamine biosynthesis; putrescine biosynthesis via agmatine pathway; putrescine from agmatine: step 1/1. In terms of biological role, catalyzes the formation of putrescine from agmatine. The sequence is that of Agmatinase from Neisseria meningitidis serogroup A / serotype 4A (strain DSM 15465 / Z2491).